The sequence spans 329 residues: Probable tyrosine--tRNA ligase, cytoplasmic (329 aa).

Tyrosine 35 contributes to the L-tyrosine binding site. Residues 40–48 carry the 'HIGH' region motif; it reads TTGKPHIAY. Tyrosine 162, glutamine 166, aspartate 169, and glutamine 184 together coordinate L-tyrosine. Positions 218 to 222 match the 'KMSKS' region motif; the sequence is KMSSS.

Belongs to the class-I aminoacyl-tRNA synthetase family. As to quaternary structure, homodimer.

The protein localises to the cytoplasm. It catalyses the reaction tRNA(Tyr) + L-tyrosine + ATP = L-tyrosyl-tRNA(Tyr) + AMP + diphosphate + H(+). The sequence is that of Probable tyrosine--tRNA ligase, cytoplasmic from Vairimorpha ceranae (strain BRL01) (Microsporidian parasite).